Here is a 132-residue protein sequence, read N- to C-terminus: Small ribosomal subunit protein uS8 (132 aa).

The protein belongs to the universal ribosomal protein uS8 family. Part of the 30S ribosomal subunit. Contacts proteins S5 and S12.

Functionally, one of the primary rRNA binding proteins, it binds directly to 16S rRNA central domain where it helps coordinate assembly of the platform of the 30S subunit. This chain is Small ribosomal subunit protein uS8, found in Psychrobacter cryohalolentis (strain ATCC BAA-1226 / DSM 17306 / VKM B-2378 / K5).